The primary structure comprises 313 residues: Probable cell division protein WhiA (313 aa).

Residues 274–308 constitute a DNA-binding region (H-T-H motif); that stretch reads SLKELGELVPGGPISKSGVNHRLRKLNAYADELRA.

It belongs to the WhiA family.

Involved in cell division and chromosome segregation. This Limosilactobacillus reuteri subsp. reuteri (strain JCM 1112) (Lactobacillus reuteri) protein is Probable cell division protein WhiA.